The sequence spans 706 residues: Termination factor NPH-I homolog (706 aa).

The Helicase ATP-binding domain maps to 62-227 (IGQGENTRGL…VPCFNMLSGR (166 aa)). An ATP-binding site is contributed by 75 to 82 (HQMGMGKT). The DEAH box signature appears at 168–171 (DEAH). In terms of domain architecture, Helicase C-terminal spans 417–599 (QCLQPLKVLE…HLNSAFRDLL (183 aa)).

Belongs to the DEAD box helicase family. DEAH subfamily. In terms of assembly, part of the viral DNA-directed RNA polymerase that consists of 8 polII-like subunits (RPB1, RPB2, RPB3, RPB5, RPB6, RPB7, RPB9, RPB10), a capping enzyme and a termination factor.

The protein resides in the virion. Functionally, putative DNA-dependent ATPase required for providing the needed energy to achieve the termination of early transcripts. This chain is Termination factor NPH-I homolog, found in Ornithodoros (relapsing fever ticks).